A 280-amino-acid chain; its full sequence is L-aspartate dehydrogenase (280 aa).

Residues Ala-134 and Asn-202 each contribute to the NAD(+) site. Residue His-232 is part of the active site.

It belongs to the L-aspartate dehydrogenase family.

It catalyses the reaction L-aspartate + NADP(+) + H2O = oxaloacetate + NH4(+) + NADPH + H(+). The enzyme catalyses L-aspartate + NAD(+) + H2O = oxaloacetate + NH4(+) + NADH + H(+). Its pathway is cofactor biosynthesis; NAD(+) biosynthesis; iminoaspartate from L-aspartate (dehydrogenase route): step 1/1. Specifically catalyzes the NAD or NADP-dependent dehydrogenation of L-aspartate to iminoaspartate. This Bradyrhizobium diazoefficiens (strain JCM 10833 / BCRC 13528 / IAM 13628 / NBRC 14792 / USDA 110) protein is L-aspartate dehydrogenase.